Reading from the N-terminus, the 216-residue chain is Imidazole glycerol phosphate synthase subunit HisH (216 aa).

The Glutamine amidotransferase type-1 domain maps to 2-216; sequence RVAIIDYGSG…LISNFLRWKP (215 aa). Residue Cys-88 is the Nucleophile of the active site. Catalysis depends on residues His-196 and Glu-198.

Heterodimer of HisH and HisF.

The protein localises to the cytoplasm. It catalyses the reaction 5-[(5-phospho-1-deoxy-D-ribulos-1-ylimino)methylamino]-1-(5-phospho-beta-D-ribosyl)imidazole-4-carboxamide + L-glutamine = D-erythro-1-(imidazol-4-yl)glycerol 3-phosphate + 5-amino-1-(5-phospho-beta-D-ribosyl)imidazole-4-carboxamide + L-glutamate + H(+). The enzyme catalyses L-glutamine + H2O = L-glutamate + NH4(+). It functions in the pathway amino-acid biosynthesis; L-histidine biosynthesis; L-histidine from 5-phospho-alpha-D-ribose 1-diphosphate: step 5/9. IGPS catalyzes the conversion of PRFAR and glutamine to IGP, AICAR and glutamate. The HisH subunit catalyzes the hydrolysis of glutamine to glutamate and ammonia as part of the synthesis of IGP and AICAR. The resulting ammonia molecule is channeled to the active site of HisF. In Rhizobium meliloti (strain 1021) (Ensifer meliloti), this protein is Imidazole glycerol phosphate synthase subunit HisH.